Reading from the N-terminus, the 423-residue chain is UDP-N-acetylglucosamine 1-carboxyvinyltransferase (423 aa).

K22–N23 lines the phosphoenolpyruvate pocket. Residue R93 participates in UDP-N-acetyl-alpha-D-glucosamine binding. C117 serves as the catalytic Proton donor. The residue at position 117 (C117) is a 2-(S-cysteinyl)pyruvic acid O-phosphothioketal. 2 residues coordinate UDP-N-acetyl-alpha-D-glucosamine: D305 and I327.

The protein belongs to the EPSP synthase family. MurA subfamily.

The protein localises to the cytoplasm. The catalysed reaction is phosphoenolpyruvate + UDP-N-acetyl-alpha-D-glucosamine = UDP-N-acetyl-3-O-(1-carboxyvinyl)-alpha-D-glucosamine + phosphate. Its pathway is cell wall biogenesis; peptidoglycan biosynthesis. Functionally, cell wall formation. Adds enolpyruvyl to UDP-N-acetylglucosamine. The chain is UDP-N-acetylglucosamine 1-carboxyvinyltransferase from Acidithiobacillus ferrooxidans (strain ATCC 23270 / DSM 14882 / CIP 104768 / NCIMB 8455) (Ferrobacillus ferrooxidans (strain ATCC 23270)).